A 704-amino-acid chain; its full sequence is Serotransferrin (704 aa).

A signal peptide spans 1–19 (MRPAVRALLACAVLGLCLA). Transferrin-like domains are found at residues 25-351 (VRWC…NLRE) and 364-689 (VKWC…NLRQ). 2 cysteine pairs are disulfide-bonded: Cys-28-Cys-66 and Cys-38-Cys-57. A Dimethylated arginine modification is found at Arg-42. 2 residues coordinate Fe(3+): Asp-81 and Tyr-113. Intrachain disulfides connect Cys-136/Cys-217, Cys-176/Cys-192, Cys-179/Cys-200, Cys-189/Cys-202, and Cys-250/Cys-264. Residues Thr-138, Arg-142, Ala-144, and Gly-145 each coordinate hydrogencarbonate. Position 211 (Tyr-211) interacts with Fe(3+). His-272 is a binding site for Fe(3+). Cystine bridges form between Cys-362-Cys-622, Cys-367-Cys-399, Cys-377-Cys-390, Cys-424-Cys-699, Cys-441-Cys-663, Cys-473-Cys-549, Cys-497-Cys-690, Cys-507-Cys-521, Cys-518-Cys-532, Cys-589-Cys-603, and Cys-641-Cys-646. Fe(3+) is bound by residues Asp-414 and Tyr-449. The hydrogencarbonate site is built by Thr-475, Arg-479, Ala-481, and Gly-482. Asn-514 carries an N-linked (GlcNAc...) asparagine glycan. A Fe(3+)-binding site is contributed by Tyr-543. His-611 lines the Fe(3+) pocket. Ser-691 carries the post-translational modification Phosphoserine.

The protein belongs to the transferrin family. As to quaternary structure, monomer. Part of a complex composed of SLC40A1/ferroportin, TF/transferrin and HEPH/hephaestin that transfers iron from cells to transferrin. As to expression, expressed by the liver and secreted in plasma.

It is found in the secreted. In terms of biological role, transferrins are iron binding transport proteins which can bind two Fe(3+) ions in association with the binding of an anion, usually bicarbonate. It is responsible for the transport of iron from sites of absorption and heme degradation to those of storage and utilization. Serum transferrin may also have a further role in stimulating cell proliferation. The chain is Serotransferrin (TF) from Bos taurus (Bovine).